The following is a 421-amino-acid chain: Indole-3-pyruvate monooxygenase YUCCA8 (421 aa).

30–35 (GAGPSG) contributes to the FAD binding site. 201-206 (GCGNSG) contacts NADP(+).

It belongs to the FMO family. The cofactor is FAD. As to expression, expressed in organs undergoing active growth and cell division.

It localises to the endoplasmic reticulum. The catalysed reaction is indole-3-pyruvate + NADPH + O2 + H(+) = (indol-3-yl)acetate + CO2 + NADP(+) + H2O. Functionally, involved in auxin biosynthesis. Converts the indole-3-pyruvic acid (IPA) produced by the TAA family to indole-3-acetic acid (IAA). Seems not able to use tryptamine (TAM) as substrate. Probably responsible for auxin biosynthesis in leaves and involved in the regulation of lateral leaf growth. Required for maintaining water homeostasis and an appropriate root to shoot ratio. Required for the inhibition of root growth by ethylene in etiolated seedlings. Functions downstream of the ethylene-response transcription factor EIL1. This is Indole-3-pyruvate monooxygenase YUCCA8 from Oryza sativa subsp. indica (Rice).